The sequence spans 212 residues: Uracil phosphoribosyltransferase (212 aa).

Residues arginine 78, arginine 103, and 130-138 (DPMLATGGS) each bind 5-phospho-alpha-D-ribose 1-diphosphate. Uracil-binding positions include isoleucine 193 and 198 to 200 (GDA). 5-phospho-alpha-D-ribose 1-diphosphate is bound at residue aspartate 199.

It belongs to the UPRTase family. Mg(2+) is required as a cofactor.

It carries out the reaction UMP + diphosphate = 5-phospho-alpha-D-ribose 1-diphosphate + uracil. It functions in the pathway pyrimidine metabolism; UMP biosynthesis via salvage pathway; UMP from uracil: step 1/1. Its activity is regulated as follows. Allosterically activated by GTP. In terms of biological role, catalyzes the conversion of uracil and 5-phospho-alpha-D-ribose 1-diphosphate (PRPP) to UMP and diphosphate. The sequence is that of Uracil phosphoribosyltransferase from Pseudomonas paraeruginosa (strain DSM 24068 / PA7) (Pseudomonas aeruginosa (strain PA7)).